The primary structure comprises 228 residues: Apoptosis regulator R1 (228 aa).

A compositionally biased stretch (basic and acidic residues) spans 1 to 21 (LNPKKKENNGVKNGDREKQHE). A disordered region spans residues 1–29 (LNPKKKENNGVKNGDREKQHETGNTIFRG). A BH1 motif is present at residues 120–139 (SLFQGGVNWGRIVAFFVFGA). The short motif at 171-186 (DWIQSNGGWNGFLTLY) is the BH2 element. Residues 207 to 227 (TVLTGAVALGALMTVGALFAS) traverse the membrane as a helical segment.

It belongs to the Bcl-2 family.

It is found in the membrane. Could be the homolog of mammalian Bcl-W. The protein is Apoptosis regulator R1 of Xenopus laevis (African clawed frog).